A 381-amino-acid chain; its full sequence is Chaperone protein DnaJ 1 (381 aa).

The J domain maps to 4–68; the sequence is DYYGLLGVSR…EKRRIVDLGG (65 aa). The segment at 132–214 adopts a CR-type zinc-finger fold; the sequence is GVTKQVTVDT…CMGDGRVRAR (83 aa). Zn(2+) contacts are provided by C145, C148, C162, C165, C188, C191, C202, and C205. 4 CXXCXGXG motif repeats span residues 145 to 152, 162 to 169, 188 to 195, and 202 to 209; these read CDRCHGKG, CDTCGGRG, CPTCRGVG, and CHQCMGDG.

Belongs to the DnaJ family. In terms of assembly, homodimer. It depends on Zn(2+) as a cofactor.

The protein resides in the cytoplasm. Its function is as follows. Participates actively in the response to hyperosmotic and heat shock by preventing the aggregation of stress-denatured proteins and by disaggregating proteins, also in an autonomous, DnaK-independent fashion. Unfolded proteins bind initially to DnaJ; upon interaction with the DnaJ-bound protein, DnaK hydrolyzes its bound ATP, resulting in the formation of a stable complex. GrpE releases ADP from DnaK; ATP binding to DnaK triggers the release of the substrate protein, thus completing the reaction cycle. Several rounds of ATP-dependent interactions between DnaJ, DnaK and GrpE are required for fully efficient folding. Also involved, together with DnaK and GrpE, in the DNA replication of plasmids through activation of initiation proteins. In Mycolicibacterium paratuberculosis (strain ATCC BAA-968 / K-10) (Mycobacterium paratuberculosis), this protein is Chaperone protein DnaJ 1.